The chain runs to 197 residues: Holliday junction branch migration complex subunit RuvA (197 aa).

The tract at residues 1–64 is domain I; that stretch reads MIASVRGVVQ…EDMLALFGFS (64 aa). The tract at residues 65 to 143 is domain II; that stretch reads SPAQRALFEL…VATISPQLST (79 aa). Residues 144 to 153 form a flexible linker region; the sequence is NPGLLALNTE. A domain III region spans residues 153–197; sequence ELIDILTSLGYSTTEAQAALNALPADAPADTEERLRLALQYFGGV.

Belongs to the RuvA family. Homotetramer. Forms an RuvA(8)-RuvB(12)-Holliday junction (HJ) complex. HJ DNA is sandwiched between 2 RuvA tetramers; dsDNA enters through RuvA and exits via RuvB. An RuvB hexamer assembles on each DNA strand where it exits the tetramer. Each RuvB hexamer is contacted by two RuvA subunits (via domain III) on 2 adjacent RuvB subunits; this complex drives branch migration. In the full resolvosome a probable DNA-RuvA(4)-RuvB(12)-RuvC(2) complex forms which resolves the HJ.

It is found in the cytoplasm. Its function is as follows. The RuvA-RuvB-RuvC complex processes Holliday junction (HJ) DNA during genetic recombination and DNA repair, while the RuvA-RuvB complex plays an important role in the rescue of blocked DNA replication forks via replication fork reversal (RFR). RuvA specifically binds to HJ cruciform DNA, conferring on it an open structure. The RuvB hexamer acts as an ATP-dependent pump, pulling dsDNA into and through the RuvAB complex. HJ branch migration allows RuvC to scan DNA until it finds its consensus sequence, where it cleaves and resolves the cruciform DNA. In Herpetosiphon aurantiacus (strain ATCC 23779 / DSM 785 / 114-95), this protein is Holliday junction branch migration complex subunit RuvA.